The primary structure comprises 135 residues: ATP synthase epsilon chain (135 aa).

This sequence belongs to the ATPase epsilon chain family. In terms of assembly, F-type ATPases have 2 components, CF(1) - the catalytic core - and CF(0) - the membrane proton channel. CF(1) has five subunits: alpha(3), beta(3), gamma(1), delta(1), epsilon(1). CF(0) has three main subunits: a, b and c.

The protein resides in the cellular thylakoid membrane. In terms of biological role, produces ATP from ADP in the presence of a proton gradient across the membrane. This is ATP synthase epsilon chain from Prochlorococcus marinus (strain NATL1A).